We begin with the raw amino-acid sequence, 358 residues long: MNASFAPSSSFVAGLRHDWSRAEIKALFELPFSDLMFQAQSVHRAWFNPNEVQVSTLCSIKTGACPEDCAYCPQSARYDTGLEKEKLMAVEKVIEEARAAKASGATRFCMGAAWRSPKGKDMPYVTAMVKGVKSLGMETCMTLGMLSEAQAQDLADAGLDYYNHNLDTSPEYYGEIITTRTYQDRLETLDNVRKAGMKVCCGGIVGMGEEVLDRAGLLQQLANMAEHPESVPINMLVKVGGTPLEREADLDPIDFIRTIAVARILMPKSHVRLSAGREQMNEQTQALAFLAGANSIFYGEKLLTTPNPEANKDMQLFNKLGIKPEAYDVHETEEEQEAALVHQLEEAKLDAFFYNAAR.

Residues 50–277 (NEVQVSTLCS…KSHVRLSAGR (228 aa)) enclose the Radical SAM core domain. The [4Fe-4S] cluster site is built by cysteine 65, cysteine 69, and cysteine 72. Residues cysteine 109, cysteine 140, cysteine 200, and arginine 272 each coordinate [2Fe-2S] cluster.

Belongs to the radical SAM superfamily. Biotin synthase family. In terms of assembly, homodimer. Requires [4Fe-4S] cluster as cofactor. [2Fe-2S] cluster serves as cofactor.

It catalyses the reaction (4R,5S)-dethiobiotin + (sulfur carrier)-SH + 2 reduced [2Fe-2S]-[ferredoxin] + 2 S-adenosyl-L-methionine = (sulfur carrier)-H + biotin + 2 5'-deoxyadenosine + 2 L-methionine + 2 oxidized [2Fe-2S]-[ferredoxin]. Its pathway is cofactor biosynthesis; biotin biosynthesis; biotin from 7,8-diaminononanoate: step 2/2. Its function is as follows. Catalyzes the conversion of dethiobiotin (DTB) to biotin by the insertion of a sulfur atom into dethiobiotin via a radical-based mechanism. This is Biotin synthase from Cellvibrio japonicus (strain Ueda107) (Pseudomonas fluorescens subsp. cellulosa).